The primary structure comprises 391 residues: Formate-dependent phosphoribosylglycinamide formyltransferase (391 aa).

Residues glutamate 20–leucine 21 and glutamate 80 contribute to the N(1)-(5-phospho-beta-D-ribosyl)glycinamide site. Residues arginine 112, lysine 153, serine 158–glutamine 163, glutamate 193–isoleucine 196, and glutamate 201 each bind ATP. An ATP-grasp domain is found at arginine 117–threonine 306. Residues glutamate 265 and glutamate 277 each contribute to the Mg(2+) site. N(1)-(5-phospho-beta-D-ribosyl)glycinamide-binding positions include aspartate 284, lysine 354, and arginine 361–arginine 362.

It belongs to the PurK/PurT family. As to quaternary structure, homodimer.

It catalyses the reaction N(1)-(5-phospho-beta-D-ribosyl)glycinamide + formate + ATP = N(2)-formyl-N(1)-(5-phospho-beta-D-ribosyl)glycinamide + ADP + phosphate + H(+). It functions in the pathway purine metabolism; IMP biosynthesis via de novo pathway; N(2)-formyl-N(1)-(5-phospho-D-ribosyl)glycinamide from N(1)-(5-phospho-D-ribosyl)glycinamide (formate route): step 1/1. Its function is as follows. Involved in the de novo purine biosynthesis. Catalyzes the transfer of formate to 5-phospho-ribosyl-glycinamide (GAR), producing 5-phospho-ribosyl-N-formylglycinamide (FGAR). Formate is provided by PurU via hydrolysis of 10-formyl-tetrahydrofolate. This chain is Formate-dependent phosphoribosylglycinamide formyltransferase, found in Vibrio parahaemolyticus serotype O3:K6 (strain RIMD 2210633).